The sequence spans 51 residues: Small ribosomal subunit protein eS31 (51 aa).

Zn(2+) contacts are provided by C22, C25, C40, and C43. A C4-type zinc finger spans residues 22–43 (CVRCSHGIFMADHGDRYACGRC).

The protein belongs to the eukaryotic ribosomal protein eS31 family. In terms of assembly, part of the 30S ribosomal subunit. Zn(2+) is required as a cofactor.

This Methanosphaera stadtmanae (strain ATCC 43021 / DSM 3091 / JCM 11832 / MCB-3) protein is Small ribosomal subunit protein eS31.